The primary structure comprises 265 residues: Type-1Ba cytolytic delta-endotoxin (265 aa).

It belongs to the cyt1/cyt2 endotoxin family. In terms of processing, active after proteolytic processing.

Functionally, kills the larvae of dipteran insects by making pores in the epithelial cell membrane of the insect midgut. The sequence is that of Type-1Ba cytolytic delta-endotoxin (cyt1Ba1) from Bacillus thuringiensis subsp. neoleoensis.